A 338-amino-acid chain; its full sequence is Rho GTPase-activating protein gacA (338 aa).

The Rho-GAP domain occupies asparagine 149–histidine 327.

The protein localises to the cytoplasm. Functionally, rho GTPase-activating protein involved in the signal transduction pathway. The polypeptide is Rho GTPase-activating protein gacA (gacA) (Dictyostelium discoideum (Social amoeba)).